Reading from the N-terminus, the 539-residue chain is Nucleoporin NUP60 (539 aa).

Phosphoserine occurs at positions 10, 49, 81, and 89. The tract at residues 44-80 (DSARVSPRNNVANKQPRNESFNRRISSMPGGYFHSEI) is disordered. Positions 91-118 (VVSAVGEARNDIENKEEEYDETHETNIS) form a coiled coil. Phosphoserine is present on residues Ser-162, Ser-171, Ser-214, and Ser-222. Composition is skewed to polar residues over residues 242–252 (TANTSAQSIAS) and 258–267 (SGVSKSAPSK). 3 disordered regions span residues 242–267 (TANT…APSK), 305–329 (IRKH…TTVK), and 347–493 (NATK…GKHI). Positions 347–359 (NATKISPSAPSKD) are enriched in polar residues. Phosphoserine is present on residues Ser-352, Ser-360, Ser-374, and Ser-382. 2 stretches are compositionally biased toward polar residues: residues 395 to 433 (SAFN…TNLQ) and 448 to 485 (GDST…LSQE). FXF repeat units lie at residues 399–401 (FSF) and 427–429 (FNF). Thr-460 is subject to Phosphothreonine. The stretch at 469–471 (FVF) is one FXF 3 repeat. 2 positions are modified to phosphoserine: Ser-480 and Ser-483. One copy of the FXF 4 repeat lies at 509-511 (FDF).

As to quaternary structure, component of the nuclear pore complex (NPC). NPC constitutes the exclusive means of nucleocytoplasmic transport. NPCs allow the passive diffusion of ions and small molecules and the active, nuclear transport receptor-mediated bidirectional transport of macromolecules such as proteins, RNAs, ribonucleoparticles (RNPs), and ribosomal subunits across the nuclear envelope. Due to its 8-fold rotational symmetry, all subunits are present with 8 copies or multiples thereof. Binds to NUP1 and NUP2 forming the nuclear basket and the distal ring. The interaction with NUP2 is GSP1-GTP-dependent. Interacts through its FG repeats with karyopherins, such as KAP123 and KAP95-SRP1 (KAP60). Also interacts with GSP1-GTP and SRM1 (PRP20), where NUP60 reduces SRM1 activity, thus inhibiting GSP1 guanine nucleotide dissociation. Post-translationally, phosphorylated by CDC28.

The protein localises to the nucleus. The protein resides in the nuclear pore complex. It localises to the nucleus membrane. Functionally, functions as a component of the nuclear pore complex (NPC). NPC components, collectively referred to as nucleoporins (NUPs), can play the role of both NPC structural components and of docking or interaction partners for transiently associated nuclear transport factors. Active directional transport is assured by both, a Phe-Gly (FG) repeat affinity gradient for these transport factors across the NPC and a transport cofactor concentration gradient across the nuclear envelope (GSP1 and GSP2 GTPases associated predominantly with GTP in the nucleus, with GDP in the cytoplasm). In Saccharomyces cerevisiae (strain ATCC 204508 / S288c) (Baker's yeast), this protein is Nucleoporin NUP60 (NUP60).